Consider the following 272-residue polypeptide: Exosome complex component Rrp42 (272 aa).

It belongs to the RNase PH family. Rrp42 subfamily. Component of the archaeal exosome complex. Forms a hexameric ring-like arrangement composed of 3 Rrp41-Rrp42 heterodimers. The hexameric ring associates with a trimer of Rrp4 and/or Csl4 subunits.

It localises to the cytoplasm. Its function is as follows. Non-catalytic component of the exosome, which is a complex involved in RNA degradation. Contributes to the structuring of the Rrp41 active site. The sequence is that of Exosome complex component Rrp42 from Thermococcus kodakarensis (strain ATCC BAA-918 / JCM 12380 / KOD1) (Pyrococcus kodakaraensis (strain KOD1)).